The chain runs to 111 residues: ATP-dependent Clp protease adapter protein ClpS (111 aa).

Belongs to the ClpS family. In terms of assembly, binds to the N-terminal domain of the chaperone ClpA.

In terms of biological role, involved in the modulation of the specificity of the ClpAP-mediated ATP-dependent protein degradation. The protein is ATP-dependent Clp protease adapter protein ClpS of Corynebacterium aurimucosum (strain ATCC 700975 / DSM 44827 / CIP 107346 / CN-1) (Corynebacterium nigricans).